The chain runs to 199 residues: Recombination protein RecR (199 aa).

The C4-type zinc-finger motif lies at 57 to 72 (CQSCRTFTEETYCPIC). A Toprim domain is found at 81-176 (EVICVVETPA…TVSRIAHGVP (96 aa)).

Belongs to the RecR family.

May play a role in DNA repair. It seems to be involved in an RecBC-independent recombinational process of DNA repair. It may act with RecF and RecO. The polypeptide is Recombination protein RecR (Shewanella pealeana (strain ATCC 700345 / ANG-SQ1)).